Reading from the N-terminus, the 114-residue chain is Nucleoid-associated protein MAE_23910 (114 aa).

Belongs to the YbaB/EbfC family. As to quaternary structure, homodimer.

It is found in the cytoplasm. Its subcellular location is the nucleoid. Binds to DNA and alters its conformation. May be involved in regulation of gene expression, nucleoid organization and DNA protection. In Microcystis aeruginosa (strain NIES-843 / IAM M-2473), this protein is Nucleoid-associated protein MAE_23910.